A 102-amino-acid polypeptide reads, in one-letter code: NADH-quinone oxidoreductase subunit K (102 aa).

A run of 3 helical transmembrane segments spans residues 5-25 (LEHY…GIFV), 31-51 (IVIL…MVAF), and 66-86 (FVLT…VVFF).

Belongs to the complex I subunit 4L family. As to quaternary structure, NDH-1 is composed of 14 different subunits. Subunits NuoA, H, J, K, L, M, N constitute the membrane sector of the complex.

It localises to the cellular chromatophore membrane. It catalyses the reaction a quinone + NADH + 5 H(+)(in) = a quinol + NAD(+) + 4 H(+)(out). In terms of biological role, NDH-1 shuttles electrons from NADH, via FMN and iron-sulfur (Fe-S) centers, to quinones in the respiratory chain. The immediate electron acceptor for the enzyme in this species is believed to be ubiquinone. Couples the redox reaction to proton translocation (for every two electrons transferred, four hydrogen ions are translocated across the cytoplasmic membrane), and thus conserves the redox energy in a proton gradient. This Rhodobacter capsulatus (Rhodopseudomonas capsulata) protein is NADH-quinone oxidoreductase subunit K.